The chain runs to 210 residues: Thymidylate kinase (210 aa).

Position 10 to 17 (10 to 17 (GLEGAGKS)) interacts with ATP.

Belongs to the thymidylate kinase family.

It carries out the reaction dTMP + ATP = dTDP + ADP. Functionally, phosphorylation of dTMP to form dTDP in both de novo and salvage pathways of dTTP synthesis. The chain is Thymidylate kinase from Haemophilus influenzae (strain PittGG).